The following is a 201-amino-acid chain: UPF0301 protein BP0319 (201 aa).

The protein belongs to the UPF0301 (AlgH) family.

The polypeptide is UPF0301 protein BP0319 (Bordetella pertussis (strain Tohama I / ATCC BAA-589 / NCTC 13251)).